Here is a 95-residue protein sequence, read N- to C-terminus: UPF0132 membrane protein AF_0736 (95 aa).

The next 3 membrane-spanning stretches (helical) occupy residues 2 to 22 (CYTL…SPFV), 32 to 52 (TFST…GALL), and 55 to 75 (VVMA…SRGE).

This sequence belongs to the UPF0132 family.

Its subcellular location is the cell membrane. This Archaeoglobus fulgidus (strain ATCC 49558 / DSM 4304 / JCM 9628 / NBRC 100126 / VC-16) protein is UPF0132 membrane protein AF_0736.